We begin with the raw amino-acid sequence, 619 residues long: MGDEDGGRRGGITRDLQKLKQQAMAYYQENDVPRKLEDLLNSTFYLQPADVYGHLKANYFSKLAKPPSICKIVGKTILDGLGLPTLQVEISCTIQNFPKYICAVAIPTHFEVVENALPEALDAEDSERAQAVNTAVQWINQSITEELWGLVPSNQAEVDHRLRTFFEHKVQEDKERKELEKSQEELVPAPPPVTLPPPPPPPPPPPSKKKGQKAGRRDTLLEKPVSPPEPPEPVLHGSMAIGAVSLAVAKASATLASDPLYLTLASLKHDQEQPSTFSMPLLMGSVLSCGKSSPGKLHLMKEVICIPSPGLTAKQSVELLLEIQKQVNRAMETLPPPKQETKKGHNGSKRAQPPITGKVSHLGCLTINYDAIEQPLLLLQGICSNLGLELGVNFHLAINCAGHELMDYSKGKYEVMVGTHKSAAEMVELYVDLINKYPSIIALIDPFRKEDAEQWDSLYAALASRCYLIAGAASGSVSKLLECRNISTLKSHGLIIKHTNQTTMSDLVEITHLINGKKLLAVFGSTDSESSDDSLVDLAVGFGARFIKLGGLSRGERMTKYNRLLAIEEELIQRGVWGFSEEHNFSFFQEDATATMAEETLGLLDSIFPTEVIEESAKT.

Basic and acidic residues predominate over residues 173-184 (DKERKELEKSQE). Residues 173–236 (DKERKELEKS…PPEPPEPVLH (64 aa)) form a disordered region. Pro residues predominate over residues 188-206 (PAPPPVTLPPPPPPPPPPP). Substrate is bound at residue E302. The tract at residues 333–354 (TLPPPKQETKKGHNGSKRAQPP) is disordered. The Proton acceptor role is filled by K497. K548 is a binding site for substrate.

The protein belongs to the enolase family. In terms of assembly, interacts with ENO1. Isoform 1 and isoform 4 interact with AKAP4. Post-translationally, synthesized as an approximately 70-kDa precursor, which then undergoes proteolytic cleavage to an approximately 60-kDa enzyme; HOATZ associates directly or indirectly with ENO4 to mediate this process before its transport to mature flagella. As to expression, testis-specific. Expressed in spermatids and ependyma (at protein level). In terms of tissue distribution, expressed at higher levels in late spermatids than in pachytene spermatocytes. Expressed at higher levels in pachytene spermatocytes than in late spermatids.

It carries out the reaction (2R)-2-phosphoglycerate = phosphoenolpyruvate + H2O. It functions in the pathway carbohydrate degradation; glycolysis; pyruvate from D-glyceraldehyde 3-phosphate: step 4/5. Required for sperm motility, function and male fertility. May be involved in the normal assembly of the sperm fibrous sheath and provides most of the enolase activity in sperm. This is Enolase 4 (Eno4) from Mus musculus (Mouse).